Consider the following 55-residue polypeptide: Large ribosomal subunit protein bL33 (55 aa).

Belongs to the bacterial ribosomal protein bL33 family.

This Zymomonas mobilis subsp. mobilis (strain ATCC 31821 / ZM4 / CP4) protein is Large ribosomal subunit protein bL33.